The primary structure comprises 427 residues: 3-phosphoshikimate 1-carboxyvinyltransferase (427 aa).

Residues K22, S23, and R27 each coordinate 3-phosphoshikimate. K22 provides a ligand contact to phosphoenolpyruvate. G93 and R122 together coordinate phosphoenolpyruvate. Residues S167, Q169, D315, and K342 each coordinate 3-phosphoshikimate. Residue Q169 participates in phosphoenolpyruvate binding. Residue D315 is the Proton acceptor of the active site. 2 residues coordinate phosphoenolpyruvate: R346 and R387.

This sequence belongs to the EPSP synthase family. In terms of assembly, monomer.

The protein localises to the cytoplasm. The enzyme catalyses 3-phosphoshikimate + phosphoenolpyruvate = 5-O-(1-carboxyvinyl)-3-phosphoshikimate + phosphate. It functions in the pathway metabolic intermediate biosynthesis; chorismate biosynthesis; chorismate from D-erythrose 4-phosphate and phosphoenolpyruvate: step 6/7. In terms of biological role, catalyzes the transfer of the enolpyruvyl moiety of phosphoenolpyruvate (PEP) to the 5-hydroxyl of shikimate-3-phosphate (S3P) to produce enolpyruvyl shikimate-3-phosphate and inorganic phosphate. This Thermus thermophilus (strain ATCC BAA-163 / DSM 7039 / HB27) protein is 3-phosphoshikimate 1-carboxyvinyltransferase.